A 442-amino-acid polypeptide reads, in one-letter code: NALCN channel auxiliary factor 2 (442 aa).

The chain crosses the membrane as a helical span at residues 42-62 (LASLLFFTVLLSNHLWLVSAG). N-linked (GlcNAc...) asparagine glycans are attached at residues Asn-77, Asn-100, Asn-171, Asn-279, and Asn-354. The chain crosses the membrane as a helical span at residues 406-426 (CVLVLMLLHTMASFSVVQNGV).

This sequence belongs to the NALF family.

It is found in the membrane. In terms of biological role, probable component of the NALCN channel complex, a channel that regulates the resting membrane potential and controls neuronal excitability. This is NALCN channel auxiliary factor 2 (nalf2) from Xenopus tropicalis (Western clawed frog).